The following is a 93-amino-acid chain: Allatostatin C (93 aa).

An N-terminal signal peptide occupies residues 1–23 (MSSVRNIAALALVLLVLAEWSAA). The propeptide occupies 24–61 (MPTTDKDKERLLNTVDLIDDDGSIETALINYLFTKQIV). Cys-83 and Cys-90 form a disulfide bridge.

The protein resides in the secreted. Inhibits juvenile hormone biosynthesis. The polypeptide is Allatostatin C (Camponotus floridanus (Florida carpenter ant)).